The primary structure comprises 364 residues: Phosphoserine aminotransferase (364 aa).

L-glutamate is bound at residue Arg40. Pyridoxal 5'-phosphate is bound by residues 74 to 75 (GT), Trp100, Thr149, Asp170, and Gln193. An N6-(pyridoxal phosphate)lysine modification is found at Lys194. 235 to 236 (NT) is a binding site for pyridoxal 5'-phosphate.

It belongs to the class-V pyridoxal-phosphate-dependent aminotransferase family. SerC subfamily. In terms of assembly, homodimer. Requires pyridoxal 5'-phosphate as cofactor. Expressed in ovary and head.

It carries out the reaction O-phospho-L-serine + 2-oxoglutarate = 3-phosphooxypyruvate + L-glutamate. It catalyses the reaction 4-(phosphooxy)-L-threonine + 2-oxoglutarate = (R)-3-hydroxy-2-oxo-4-phosphooxybutanoate + L-glutamate. It participates in amino-acid biosynthesis; L-serine biosynthesis; L-serine from 3-phospho-D-glycerate: step 2/3. It functions in the pathway cofactor biosynthesis; pyridoxine 5'-phosphate biosynthesis; pyridoxine 5'-phosphate from D-erythrose 4-phosphate: step 3/5. Its function is as follows. Catalyzes the reversible conversion of 3-phosphohydroxypyruvate to phosphoserine and of 3-hydroxy-2-oxo-4-phosphonooxybutanoate to phosphohydroxythreonine. This is Phosphoserine aminotransferase from Drosophila melanogaster (Fruit fly).